The following is a 365-amino-acid chain: Histidinol-phosphate aminotransferase (365 aa).

Lys-221 is subject to N6-(pyridoxal phosphate)lysine.

This sequence belongs to the class-II pyridoxal-phosphate-dependent aminotransferase family. Histidinol-phosphate aminotransferase subfamily. As to quaternary structure, homodimer. Pyridoxal 5'-phosphate serves as cofactor.

It catalyses the reaction L-histidinol phosphate + 2-oxoglutarate = 3-(imidazol-4-yl)-2-oxopropyl phosphate + L-glutamate. The protein operates within amino-acid biosynthesis; L-histidine biosynthesis; L-histidine from 5-phospho-alpha-D-ribose 1-diphosphate: step 7/9. This Rhodopseudomonas palustris (strain HaA2) protein is Histidinol-phosphate aminotransferase.